Reading from the N-terminus, the 479-residue chain is PRAME family member 18 (479 aa).

The stretch at 15–38 (QSLLRDQALAISVLDELPRELFPP) is one LRR 1 repeat. An LRR 1; degenerate repeat occupies 97–124 (RWKLQVLEMRDVDENFWTIWSGARLLSC). The stretch at 179 to 203 (HLCCTKVVNYSMSILNFRNILETVY) is one LRR 2; degenerate repeat. The stretch at 204 to 230 (PDSIQVLEIWNMCWLCMIVEFSRYLSQ) is one LRR 3; degenerate repeat. Residues 231–265 (MRNLRKLFISDGCRYLLSSDSQEQLVAEFSSVLLR) form an LRR 4; degenerate repeat. 5 LRR repeats span residues 266-291 (LENL…IRCL), 292-323 (RSPL…SQLK), 324-342 (QLNL…PLRA), 348-375 (AATL…ALSR), and 376-400 (CSNL…LLRH).

It belongs to the PRAME family.

This is PRAME family member 18 from Homo sapiens (Human).